The following is a 177-amino-acid chain: von Ebner gland protein 2 (177 aa).

The N-terminal stretch at 1–18 (MKALLLTFSLSLLAALQA) is a signal peptide. C80 and C172 are disulfide-bonded.

Belongs to the calycin superfamily. Lipocalin family. Homodimer.

It localises to the secreted. Could play a role in taste reception. Could be necessary for the concentration and delivery of sapid molecules in the gustatory system. This chain is von Ebner gland protein 2 (Vegp2), found in Rattus norvegicus (Rat).